A 186-amino-acid polypeptide reads, in one-letter code: Large ribosomal subunit protein uL5m (186 aa).

The protein belongs to the universal ribosomal protein uL5 family.

It is found in the mitochondrion. The sequence is that of Large ribosomal subunit protein uL5m (RPL5) from Solanum tuberosum (Potato).